The primary structure comprises 317 residues: Malate dehydrogenase (317 aa).

NAD(+)-binding positions include 13–18 (GAGNIG) and D38. Positions 87 and 93 each coordinate substrate. Residues N100 and 123–125 (VTN) contribute to the NAD(+) site. 2 residues coordinate substrate: N125 and R156. H180 (proton acceptor) is an active-site residue.

It belongs to the LDH/MDH superfamily. MDH type 3 family.

The enzyme catalyses (S)-malate + NAD(+) = oxaloacetate + NADH + H(+). Its function is as follows. Catalyzes the reversible oxidation of malate to oxaloacetate. The sequence is that of Malate dehydrogenase from Anaplasma marginale (strain St. Maries).